The chain runs to 77 residues: Putative defensin-like protein 187 (77 aa).

The N-terminal stretch at 1 to 19 (MKNSSIMFVLIVVFLISSS) is a signal peptide. 3 disulfide bridges follow: cysteine 31/cysteine 77, cysteine 43/cysteine 71, and cysteine 47/cysteine 73.

Belongs to the DEFL family.

The protein localises to the secreted. The sequence is that of Putative defensin-like protein 187 (LCR42) from Arabidopsis thaliana (Mouse-ear cress).